A 131-amino-acid chain; its full sequence is Small ribosomal subunit protein uS8 (131 aa).

This sequence belongs to the universal ribosomal protein uS8 family. In terms of assembly, part of the 30S ribosomal subunit. Contacts proteins S5 and S12.

Functionally, one of the primary rRNA binding proteins, it binds directly to 16S rRNA central domain where it helps coordinate assembly of the platform of the 30S subunit. The protein is Small ribosomal subunit protein uS8 of Hyphomonas neptunium (strain ATCC 15444).